A 281-amino-acid chain; its full sequence is 3-deoxy-manno-octulosonate cytidylyltransferase (281 aa).

This sequence belongs to the KdsB family.

It localises to the cytoplasm. It carries out the reaction 3-deoxy-alpha-D-manno-oct-2-ulosonate + CTP = CMP-3-deoxy-beta-D-manno-octulosonate + diphosphate. The protein operates within nucleotide-sugar biosynthesis; CMP-3-deoxy-D-manno-octulosonate biosynthesis; CMP-3-deoxy-D-manno-octulosonate from 3-deoxy-D-manno-octulosonate and CTP: step 1/1. Its pathway is bacterial outer membrane biogenesis; lipopolysaccharide biosynthesis. Functionally, activates KDO (a required 8-carbon sugar) for incorporation into bacterial lipopolysaccharide in Gram-negative bacteria. This Xanthomonas campestris pv. campestris (strain B100) protein is 3-deoxy-manno-octulosonate cytidylyltransferase.